A 127-amino-acid polypeptide reads, in one-letter code: Fumarate reductase subunit C (127 aa).

3 helical membrane passes run 30-50 (ATVL…GSLV), 67-87 (LVIA…QTFF), and 107-127 (IIVL…LIVV).

Belongs to the FrdC family. As to quaternary structure, part of an enzyme complex containing four subunits: a flavoprotein (FrdA), an iron-sulfur protein (FrdB), and two hydrophobic anchor proteins (FrdC and FrdD).

The protein localises to the cell inner membrane. In terms of biological role, anchors the catalytic components of the fumarate reductase complex to the cell membrane, binds quinones. In Vibrio cholerae serotype O1 (strain ATCC 39541 / Classical Ogawa 395 / O395), this protein is Fumarate reductase subunit C.